We begin with the raw amino-acid sequence, 569 residues long: Urease subunit alpha (569 aa).

In terms of domain architecture, Urease spans 131–569; sequence GGIDTHIHFI…LPLAQRYLLL (439 aa). Residues His-136, His-138, and Lys-219 each contribute to the Ni(2+) site. Lys-219 is subject to N6-carboxylysine. His-221 is a substrate binding site. His-248 and His-274 together coordinate Ni(2+). The active-site Proton donor is His-322. Asp-362 is a binding site for Ni(2+).

It belongs to the metallo-dependent hydrolases superfamily. Urease alpha subunit family. Heterotrimer of UreA (gamma), UreB (beta) and UreC (alpha) subunits. Three heterotrimers associate to form the active enzyme. The cofactor is Ni cation. Carboxylation allows a single lysine to coordinate two nickel ions.

The protein resides in the cytoplasm. The enzyme catalyses urea + 2 H2O + H(+) = hydrogencarbonate + 2 NH4(+). It participates in nitrogen metabolism; urea degradation; CO(2) and NH(3) from urea (urease route): step 1/1. The polypeptide is Urease subunit alpha (Synechococcus sp. (strain WH7805)).